The sequence spans 371 residues: Glutamate 5-kinase (371 aa).

Residue Lys10 participates in ATP binding. Substrate is bound by residues Ser50, Asp137, and Asn149. ATP is bound by residues 169–170 (SD) and 208–214 (TGGMYTK). In terms of domain architecture, PUA spans 274-352 (QGKVYIDDGA…EEIKNILGED (79 aa)).

The protein belongs to the glutamate 5-kinase family.

It localises to the cytoplasm. The catalysed reaction is L-glutamate + ATP = L-glutamyl 5-phosphate + ADP. It functions in the pathway amino-acid biosynthesis; L-proline biosynthesis; L-glutamate 5-semialdehyde from L-glutamate: step 1/2. Catalyzes the transfer of a phosphate group to glutamate to form L-glutamate 5-phosphate. This is Glutamate 5-kinase from Dictyoglomus thermophilum (strain ATCC 35947 / DSM 3960 / H-6-12).